The sequence spans 660 residues: Arginine--tRNA ligase, cytoplasmic (660 aa).

Met1 carries the N-acetylmethionine modification. Residues 1-72 form a could be involved in the assembly of the multisynthetase complex region; the sequence is MDALVAHCSA…QAERNKPTKT (72 aa). Residues 200 to 202, His211, Tyr384, Asp388, and Gln412 each bind L-arginine; that span reads SPN. Residues 201 to 212 carry the 'HIGH' region motif; it reads PNIAKEMHVGHL. An interaction with tRNA region spans residues 529–543; sequence NTAAYLLYAFTRIRS.

This sequence belongs to the class-I aminoacyl-tRNA synthetase family. As to quaternary structure, interacts (via N-terminus) with AIMP1 (via N-terminus); this stimulates its catalytic activity. Interacts (via N-terminus) with LARS2 (via C-terminus). Monomer. Part of a multisubunit complex that groups tRNA ligases for Arg (RARS1), Asp (DARS1), Gln (QARS1), Ile (IARS1), Leu (LARS1), Lys (KARS1), Met (MARS1) the bifunctional ligase for Glu and Pro (EPRS1) and the auxiliary subunits AIMP1/p43, AIMP2/p38 and EEF1E1/p18. Interacts with QARS1. Part of a complex composed of RARS1, QARS1 and AIMP1.

Its subcellular location is the cytoplasm. The protein resides in the cytosol. The enzyme catalyses tRNA(Arg) + L-arginine + ATP = L-arginyl-tRNA(Arg) + AMP + diphosphate. Functionally, forms part of a macromolecular complex that catalyzes the attachment of specific amino acids to cognate tRNAs during protein synthesis. Modulates the secretion of AIMP1 and may be involved in generation of the inflammatory cytokine EMAP2 from AIMP1. The chain is Arginine--tRNA ligase, cytoplasmic (RARS1) from Bos taurus (Bovine).